The primary structure comprises 113 residues: N(2)-fixation sustaining protein CowN (113 aa).

This sequence belongs to the CowN family.

Functionally, is required to sustain N(2)-dependent growth in the presence of low levels of carbon monoxide (CO). Probably acts by protecting the N(2) fixation ability of the nitrogenase complex, which is inactivated in the presence of CO. In Azoarcus sp. (strain BH72), this protein is N(2)-fixation sustaining protein CowN.